The following is a 574-amino-acid chain: Glycine--tRNA ligase (574 aa).

Substrate-binding residues include Arg-96 and Glu-162. ATP contacts are provided by residues 194 to 196 (RNE), 204 to 209 (IRLREF), 327 to 328 (EC), and 450 to 453 (GIDR). 209-213 (FTQAE) lines the substrate pocket. 446-450 (EPSYG) is a binding site for substrate.

The protein belongs to the class-II aminoacyl-tRNA synthetase family.

The protein resides in the cytoplasm. The catalysed reaction is tRNA(Gly) + glycine + ATP = glycyl-tRNA(Gly) + AMP + diphosphate. Its function is as follows. Catalyzes the attachment of glycine to tRNA(Gly). The chain is Glycine--tRNA ligase from Methanococcus vannielii (strain ATCC 35089 / DSM 1224 / JCM 13029 / OCM 148 / SB).